The following is a 340-amino-acid chain: Uroporphyrinogen decarboxylase (340 aa).

Substrate-binding positions include 21–25 (RQAGR), D71, Y148, S203, and H316.

This sequence belongs to the uroporphyrinogen decarboxylase family. In terms of assembly, homodimer.

It is found in the cytoplasm. It carries out the reaction uroporphyrinogen III + 4 H(+) = coproporphyrinogen III + 4 CO2. It functions in the pathway porphyrin-containing compound metabolism; protoporphyrin-IX biosynthesis; coproporphyrinogen-III from 5-aminolevulinate: step 4/4. Its function is as follows. Catalyzes the decarboxylation of four acetate groups of uroporphyrinogen-III to yield coproporphyrinogen-III. The protein is Uroporphyrinogen decarboxylase of Campylobacter jejuni subsp. jejuni serotype O:23/36 (strain 81-176).